We begin with the raw amino-acid sequence, 119 residues long: Large ribosomal subunit protein bL19c (119 aa).

It belongs to the bacterial ribosomal protein bL19 family.

It localises to the plastid. The protein resides in the chloroplast. The polypeptide is Large ribosomal subunit protein bL19c (Mesostigma viride (Green alga)).